Consider the following 483-residue polypeptide: Regulatory protein ViaA (483 aa).

It belongs to the ViaA family. In terms of assembly, homodimer. Interacts with RavA.

It localises to the cytoplasm. Its function is as follows. Component of the RavA-ViaA chaperone complex, which may act on the membrane to optimize the function of some of the respiratory chains. ViaA stimulates the ATPase activity of RavA. The polypeptide is Regulatory protein ViaA (Escherichia coli O127:H6 (strain E2348/69 / EPEC)).